Reading from the N-terminus, the 349-residue chain is tRNA pseudouridine synthase D (349 aa).

Phenylalanine 26 contributes to the substrate binding site. Catalysis depends on aspartate 79, which acts as the Nucleophile. Residue asparagine 128 participates in substrate binding. Residues 154–302 (GVPNYFGSQR…VEGSRRAVLL (149 aa)) form the TRUD domain. Residue phenylalanine 328 participates in substrate binding.

Belongs to the pseudouridine synthase TruD family.

It carries out the reaction uridine(13) in tRNA = pseudouridine(13) in tRNA. Functionally, responsible for synthesis of pseudouridine from uracil-13 in transfer RNAs. The polypeptide is tRNA pseudouridine synthase D (Yersinia pseudotuberculosis serotype O:1b (strain IP 31758)).